The following is a 97-amino-acid chain: Cytochrome c oxidase subunit 4 isoform 1, mitochondrial (97 aa).

Residues 1 to 22 (MLATRVFNLIGRRAISTSVCVR) constitute a mitochondrion transit peptide. N6-acetyllysine; alternate is present on lysine 29. At lysine 29 the chain carries N6-succinyllysine; alternate. Lysine 53 is subject to N6-acetyllysine. Phosphoserine is present on residues serine 56 and serine 58. Lysine 60 carries the post-translational modification N6-acetyllysine; alternate. Position 60 is an N6-succinyllysine; alternate (lysine 60). Lysine 67 is subject to N6-acetyllysine.

It belongs to the cytochrome c oxidase IV family. In terms of assembly, component of the cytochrome c oxidase (complex IV, CIV), a multisubunit enzyme composed of 14 subunits. The complex is composed of a catalytic core of 3 subunits MT-CO1, MT-CO2 and MT-CO3, encoded in the mitochondrial DNA, and 11 supernumerary subunits COX4I, COX5A, COX5B, COX6A, COX6B, COX6C, COX7A, COX7B, COX7C, COX8 and NDUFA4, which are encoded in the nuclear genome. The complex exists as a monomer or a dimer and forms supercomplexes (SCs) in the inner mitochondrial membrane with NADH-ubiquinone oxidoreductase (complex I, CI) and ubiquinol-cytochrome c oxidoreductase (cytochrome b-c1 complex, complex III, CIII), resulting in different assemblies (supercomplex SCI(1)III(2)IV(1) and megacomplex MCI(2)III(2)IV(2)). Interacts with PHB2; the interaction decreases in absence of SPHK2. Interacts with AFG1L. Interacts with ABCB7; this interaction allows the regulation of cellular iron homeostasis and cellular reactive oxygen species (ROS) levels in cardiomyocytes. Interacts with FLVCR2; this interaction occurs in the absence of heme and is disrupted upon heme binding. Interacts with IRGC.

The protein localises to the mitochondrion inner membrane. The protein operates within energy metabolism; oxidative phosphorylation. Its function is as follows. Component of the cytochrome c oxidase, the last enzyme in the mitochondrial electron transport chain which drives oxidative phosphorylation. The respiratory chain contains 3 multisubunit complexes succinate dehydrogenase (complex II, CII), ubiquinol-cytochrome c oxidoreductase (cytochrome b-c1 complex, complex III, CIII) and cytochrome c oxidase (complex IV, CIV), that cooperate to transfer electrons derived from NADH and succinate to molecular oxygen, creating an electrochemical gradient over the inner membrane that drives transmembrane transport and the ATP synthase. Cytochrome c oxidase is the component of the respiratory chain that catalyzes the reduction of oxygen to water. Electrons originating from reduced cytochrome c in the intermembrane space (IMS) are transferred via the dinuclear copper A center (CU(A)) of subunit 2 and heme A of subunit 1 to the active site in subunit 1, a binuclear center (BNC) formed by heme A3 and copper B (CU(B)). The BNC reduces molecular oxygen to 2 water molecules using 4 electrons from cytochrome c in the IMS and 4 protons from the mitochondrial matrix. The chain is Cytochrome c oxidase subunit 4 isoform 1, mitochondrial (COX4I1) from Sus scrofa (Pig).